The following is a 1110-amino-acid chain: Serine/threonine-protein kinase PknK (1110 aa).

In terms of domain architecture, Protein kinase spans 26–283; sequence FDNVEEIGRG…TAADVGEELR (258 aa). ATP-binding positions include 32-40 and Lys-55; that span reads IGRGGFGVV. The active-site Proton acceptor is Asp-149. Mg(2+) contacts are provided by Asn-154 and Asp-167. 2 positions are modified to phosphothreonine; by autocatalysis: Thr-179 and Thr-181. The tract at residues 308–343 is disordered; it reads RSPEAHAAHRHTGGGTPTVPTPPTPATKYRPSVPTG.

Belongs to the protein kinase superfamily. Ser/Thr protein kinase family. In terms of assembly, forms oligomeric complexes in solution. In terms of processing, can autophosphorylate the carboxyl terminal region in addition to Thr-179 and Thr-181.

The protein localises to the cytoplasm. Its subcellular location is the cell membrane. The protein resides in the secreted. It localises to the cell wall. The enzyme catalyses L-seryl-[protein] + ATP = O-phospho-L-seryl-[protein] + ADP + H(+). The catalysed reaction is L-threonyl-[protein] + ATP = O-phospho-L-threonyl-[protein] + ADP + H(+). Its function is as follows. Key microbial factor involved in regulation of early and late events in tuberculosis infection, and in host-pathogen interactions. This is Serine/threonine-protein kinase PknK (pknK) from Mycobacterium tuberculosis (strain CDC 1551 / Oshkosh).